The following is a 121-amino-acid chain: Large ribosomal subunit protein bL31 (121 aa).

Residues 1–97 are large ribosomal subunit protein bL31; sequence MKEGIHPDYK…AKENRAAKRA (97 aa). Residues Cys-16, Cys-18, Cys-36, and Cys-39 each contribute to the Zn(2+) site. Residues 65–80 are compositionally biased toward low complexity; the sequence is ATPAKAEPAKKAPAAE. Positions 65–121 are disordered; that stretch reads ATPAKAEPAKKAPAAEPAKKVEAAKENRAAKRAKAGKSKKSEAAPAAEAPAADAKPE. A unknown region spans residues 74 to 121; that stretch reads KKAPAAEPAKKVEAAKENRAAKRAKAGKSKKSEAAPAAEAPAADAKPE. Positions 81 to 93 are enriched in basic and acidic residues; the sequence is PAKKVEAAKENRA. Over residues 107 to 121 the composition is skewed to low complexity; it reads AAPAAEAPAADAKPE.

It belongs to the bacterial ribosomal protein bL31 family. Type A subfamily. As to quaternary structure, part of the 50S ribosomal subunit. It depends on Zn(2+) as a cofactor.

Its function is as follows. Binds the 23S rRNA. This chain is Large ribosomal subunit protein bL31, found in Anaeromyxobacter dehalogenans (strain 2CP-C).